Here is a 271-residue protein sequence, read N- to C-terminus: Cytosolic Fe-S cluster assembly factor NUBP2 (271 aa).

At methionine 1 the chain carries N-acetylmethionine. Glycine 22–serine 29 lines the ATP pocket. 2 residues coordinate [4Fe-4S] cluster: cysteine 196 and cysteine 199.

It belongs to the Mrp/NBP35 ATP-binding proteins family. NUBP2/CFD1 subfamily. As to quaternary structure, heterotetramer of 2 NUBP1 and 2 NUBP2 chains. Interacts with KIFC1. Interacts with NUBP1. [4Fe-4S] cluster serves as cofactor. In terms of tissue distribution, widely expressed with highest expression in skeletal muscle.

It localises to the nucleus. Its subcellular location is the cytoplasm. The protein resides in the cytoskeleton. It is found in the microtubule organizing center. The protein localises to the centrosome. It localises to the cilium axoneme. Its subcellular location is the centriole. Component of the cytosolic iron-sulfur (Fe/S) protein assembly (CIA) machinery. Required for maturation of extramitochondrial Fe-S proteins. The NUBP1-NUBP2 heterotetramer forms a Fe-S scaffold complex, mediating the de novo assembly of an Fe-S cluster and its transfer to target apoproteins. Negatively regulates cilium formation and structure. The polypeptide is Cytosolic Fe-S cluster assembly factor NUBP2 (Homo sapiens (Human)).